Consider the following 65-residue polypeptide: U15-hexatoxin-Mg1a (65 aa).

In terms of processing, contains 4 disulfide bonds. As to expression, expressed by the venom gland.

The protein localises to the secreted. Its function is as follows. Intrathorax injection into crickets causes paralysis prolonged for more than 60 minutes, followed by recovery. The chain is U15-hexatoxin-Mg1a from Macrothele gigas (Japanese funnel web spider).